We begin with the raw amino-acid sequence, 930 residues long: MLSGILIAALLMTLWGGWQPDIAHASDEFDALRIKWATLLTGGPALDPADSDIAARTDKLAQDANDYWEDMDLSSSRTYIWYALRGNGTSDNVNAVYERLRTMALAATTVGSSLYGNADLKEDILDALDWLYVNSYNSTRSRSAYNWWHWQLGIPMSLNDIAVLLYDDISAARMATYMDTIDYFTPSIGLTGANRAWQAIVVGVRAVIVKDAVKLAAARNGLSGTGIFPYATGGDGFYADGSFVQHTTFAYTGGYGSSVLETTANLMYLLSGSTWSVSDPNQSNVWQWIYEAYRPLLYKGAMMDMVRGREISRSYAQDHAVGHGIVASIVRLAQFAPAPHAAAFKQIAKRVIQEDTFSSFYGDVSTDTIRLAKAIVDDPSIAPAAAPNLYKQYAAMDRAVLQRPGFALGLALYSTRISSYESINSENGRGWYTGAGATYLYNQDLAQYSEDYWPTVDAYRIPGTTVASGTPIASGTGTSSWTGGVSLAGQYGASGMDLSYGAYNLSARKSWFMFDDEIVALGSGISSTAGIPIETVVDNRKLNGAGDNAWTANGAALSTGLGVAQTLTGVNWVHLAGNTADGSDIGYYFPGGATLQTKREARTGTWKQINNRPATPSTAVTRNYETMWIDHGTNPSGASYGYVLLPNKTSAQVGAYAADPAIEIVVNTSGVQSVKEKTLGLVGANFWTDTTQTADLITSNKKASVMTREIADERLEASVSDPTQANNGTIAIELARSAEGYSADPGITVTQLAPTIKFTVNVNGAKGKSFHASFQLGEDTSGPVDPGEPELPSVIVDNADSAGVTRTGTWKTASTQTDRYGANYLHDDNAGKGTKSVTFTPNLPIAGSYEVYLMWPAHFNREDAVQVDVGHASGTTRTAVDQRSGGGVWHSIGTYEFLAGSGGSVTIRNDALGSPDGYVVADAVKFVAVG.

The signal sequence occupies residues 1 to 25 (MLSGILIAALLMTLWGGWQPDIAHA). Xanthan contacts are provided by residues 146 to 148 (NWW), H246, Y255, R309, 313 to 315 (RSY), and N424. Catalysis depends on Y255, which acts as the Proton donor/acceptor. 3 residues coordinate Ca(2+): D515, D516, and E517. R612 is a xanthan binding site. Residue E676 coordinates Ca(2+).

Belongs to the polysaccharide lyase 8 family. Monomer.

The protein resides in the secreted. The enzyme catalyses Eliminative cleavage of the terminal beta-D-mannosyl-(1-&gt;4)-beta-D-glucuronosyl linkage of the side-chain of the polysaccharide xanthan, leaving a 4-deoxy-alpha-L-threo-hex-4-enuronosyl group at the terminus of the side-chain.. Activated by Co(2+) at 1 mM. Completely inhibited by Hg(2+) but not affected by other divalent cations. Intensely inhibited by NaCl and KCl at 150 mM, in particular by the Na(+) and K(+) ions but not the Cl(-) ions. Partially inhibited by iodoacetamide and N-ethylmaleimide at 1 mM but not by dithiothreitol, reduced glutathione or 2-mercaptoethanol. Its function is as follows. Plays a role in xanthan depolymerization pathway by cleaving the linkage between the terminal mannosyl and glucuronyl residues of the side chain of xanthan to liberate pyruvylated mannose. Is highly specific for pyruvylated side-chains of xanthan and is not effective with hyaluronate, chondroitin A, gellan, heparin or pectin. In Bacillus sp. (strain GL1), this protein is Xanthan lyase.